Consider the following 88-residue polypeptide: YcgL domain-containing protein NTHI1684 (88 aa).

Residues Met1–Ser85 enclose the YcgL domain.

This chain is YcgL domain-containing protein NTHI1684, found in Haemophilus influenzae (strain 86-028NP).